Reading from the N-terminus, the 467-residue chain is Putative vacuolar protein sorting-associated protein TDA6 (467 aa).

Residues I8 to L28 traverse the membrane as a helical segment. N-linked (GlcNAc...) asparagine glycans are attached at residues N61, N124, and N141.

Belongs to the VPS62 family.

It localises to the membrane. Involved in vacuolar protein sorting. This Saccharomyces cerevisiae (strain ATCC 204508 / S288c) (Baker's yeast) protein is Putative vacuolar protein sorting-associated protein TDA6 (TDA6).